Consider the following 204-residue polypeptide: Guanylate kinase (204 aa).

The region spanning 16–196 (AKVIIFSAPS…AKAHALKVIK (181 aa)) is the Guanylate kinase-like domain. 23–30 (APSGSGKS) is an ATP binding site.

It belongs to the guanylate kinase family.

It localises to the cytoplasm. It carries out the reaction GMP + ATP = GDP + ADP. Essential for recycling GMP and indirectly, cGMP. The chain is Guanylate kinase from Bacteroides fragilis (strain ATCC 25285 / DSM 2151 / CCUG 4856 / JCM 11019 / LMG 10263 / NCTC 9343 / Onslow / VPI 2553 / EN-2).